The following is a 245-amino-acid chain: Biosynthetic peptidoglycan transglycosylase (245 aa).

A helical membrane pass occupies residues 20 to 42; it reads VYAGSVFAGAWLATQLFYLVQIA.

This sequence belongs to the glycosyltransferase 51 family.

Its subcellular location is the cell inner membrane. The enzyme catalyses [GlcNAc-(1-&gt;4)-Mur2Ac(oyl-L-Ala-gamma-D-Glu-L-Lys-D-Ala-D-Ala)](n)-di-trans,octa-cis-undecaprenyl diphosphate + beta-D-GlcNAc-(1-&gt;4)-Mur2Ac(oyl-L-Ala-gamma-D-Glu-L-Lys-D-Ala-D-Ala)-di-trans,octa-cis-undecaprenyl diphosphate = [GlcNAc-(1-&gt;4)-Mur2Ac(oyl-L-Ala-gamma-D-Glu-L-Lys-D-Ala-D-Ala)](n+1)-di-trans,octa-cis-undecaprenyl diphosphate + di-trans,octa-cis-undecaprenyl diphosphate + H(+). Its pathway is cell wall biogenesis; peptidoglycan biosynthesis. In terms of biological role, peptidoglycan polymerase that catalyzes glycan chain elongation from lipid-linked precursors. This is Biosynthetic peptidoglycan transglycosylase from Burkholderia ambifaria (strain MC40-6).